A 96-amino-acid polypeptide reads, in one-letter code: Glutamyl-tRNA(Gln) amidotransferase subunit C (96 aa).

The protein belongs to the GatC family. Heterotrimer of A, B and C subunits.

The catalysed reaction is L-glutamyl-tRNA(Gln) + L-glutamine + ATP + H2O = L-glutaminyl-tRNA(Gln) + L-glutamate + ADP + phosphate + H(+). The enzyme catalyses L-aspartyl-tRNA(Asn) + L-glutamine + ATP + H2O = L-asparaginyl-tRNA(Asn) + L-glutamate + ADP + phosphate + 2 H(+). In terms of biological role, allows the formation of correctly charged Asn-tRNA(Asn) or Gln-tRNA(Gln) through the transamidation of misacylated Asp-tRNA(Asn) or Glu-tRNA(Gln) in organisms which lack either or both of asparaginyl-tRNA or glutaminyl-tRNA synthetases. The reaction takes place in the presence of glutamine and ATP through an activated phospho-Asp-tRNA(Asn) or phospho-Glu-tRNA(Gln). In Neisseria meningitidis serogroup A / serotype 4A (strain DSM 15465 / Z2491), this protein is Glutamyl-tRNA(Gln) amidotransferase subunit C.